The primary structure comprises 379 residues: Putative cyclic ADP-D-ribose synthase TIR2 (379 aa).

Residues 254–379 (KVYDVFISHS…TISWTTGLVK (126 aa)) form the TIR domain. Residue Glu-335 is part of the active site.

Homodimer.

Its subcellular location is the cytoplasm. Activated upon phage infection. Its function is as follows. One of 2 TIR-like protein components of the Thoeris antiviral defense system, composed of ThsA, TIR1 (thsB1) and TIR2 (thsB2). Phage infection activates this protein; by 70 minutes post-infection with phage SPO1, TIR2 generates a signal molecule that in turn activates the NAD(+) hydrolase activity of ThsA (tested with B.cereus). The signal is similar to cyclic ADP-D-ribose, but how it differs is unknown. Expression of Thoeris in B.subtilis (strain BEST7003) confers resistance to phages phi29, phi3T, SPBeta, SBSphi11, SBSphi13, SBSphiJ, SPO1 and SPR but not SBSphiC. The TIR paralogs confer resistance to different phages; this subunit confers resistance to phi3T, SPBeta, SBSphi13, SBSphiJ, SPO1 and SPR but not phi29, SBSphi11 or SBSphiC. There is overlap in the phage range for this system, both TIR1 and TIR2 are activated by SBSphi13, SBSphiJ, SPO1 and SPR. Probably hydrolyzes NAD(+) to make a cyclic ADP-D-ribose (cADPR) signaling molecule; might make 3'cADPR. The polypeptide is Putative cyclic ADP-D-ribose synthase TIR2 (Cytobacillus dafuensis (Bacillus dafuensis)).